The chain runs to 262 residues: Nurim (262 aa).

Topologically, residues 1–4 are nuclear; that stretch reads MAPA. The helical transmembrane segment at 5 to 28 threads the bilayer; it reads LLLVPAALASFILAFGTGVEFVRF. Topologically, residues 29-58 are perinuclear space; the sequence is TSLRPLLGGIPESGGPDARQGWLAALQDRS. The chain crosses the membrane as a helical span at residues 59–80; the sequence is ILAPLAWDLGLLLLFVGQHSLM. At 81 to 97 the chain is on the nuclear side; that stretch reads AAERVKAWTSRYFGVLQ. Residues 98 to 114 traverse the membrane as a helical segment; sequence RSLYVACTALALQLVMR. Residues 115 to 133 are Perinuclear space-facing; sequence YWEPIPKGPVLWEARAEPW. The chain crosses the membrane as a helical span at residues 134 to 164; it reads ATWVPLLCFVLHVISWLLIFSILLVFDYAEL. Topologically, residues 165–191 are nuclear; that stretch reads MGLKQVYYHVLGLGEPLALKSPRALRL. The chain crosses the membrane as a helical span at residues 192–210; sequence FSHLRHPVCVELLTVLWVV. The Perinuclear space segment spans residues 211-216; the sequence is PTLGTD. A helical transmembrane segment spans residues 217-234; that stretch reads RLLLAFLLTLYLGLAHGL. Residues 235–262 lie on the Nuclear side of the membrane; that stretch reads DQQDLRYLRAQLQRKLHLLSRPQDGEAE.

It belongs to the nurim family.

The protein resides in the nucleus inner membrane. The chain is Nurim (NRM) from Pan troglodytes (Chimpanzee).